Reading from the N-terminus, the 272-residue chain is tRNA pseudouridine synthase B (272 aa).

D38 acts as the Nucleophile in catalysis.

The protein belongs to the pseudouridine synthase TruB family. Type 1 subfamily.

It catalyses the reaction uridine(55) in tRNA = pseudouridine(55) in tRNA. Its function is as follows. Responsible for synthesis of pseudouridine from uracil-55 in the psi GC loop of transfer RNAs. This chain is tRNA pseudouridine synthase B, found in Campylobacter jejuni subsp. jejuni serotype O:2 (strain ATCC 700819 / NCTC 11168).